The chain runs to 106 residues: UPF0145 protein CPE0882 (106 aa).

This sequence belongs to the UPF0145 family.

In Clostridium perfringens (strain 13 / Type A), this protein is UPF0145 protein CPE0882.